The primary structure comprises 112 residues: uncharacterized protein (112 aa).

2 positions are modified to phosphoserine: Ser-51 and Ser-53. Residues 90 to 110 (FIFTLSMFLIAFILLIAFVSF) traverse the membrane as a helical segment.

The protein localises to the golgi apparatus membrane. The protein resides in the endoplasmic reticulum membrane. This is an uncharacterized protein from Schizosaccharomyces pombe (strain 972 / ATCC 24843) (Fission yeast).